We begin with the raw amino-acid sequence, 399 residues long: Chorismate synthase (399 aa).

The NADP(+) site is built by Arg-40 and Arg-46. FMN is bound by residues 135–137, 256–257, Gly-301, 316–320, and Arg-342; these read RAS, QA, and KPIAT.

It belongs to the chorismate synthase family. As to quaternary structure, homotetramer. It depends on FMNH2 as a cofactor.

It catalyses the reaction 5-O-(1-carboxyvinyl)-3-phosphoshikimate = chorismate + phosphate. The protein operates within metabolic intermediate biosynthesis; chorismate biosynthesis; chorismate from D-erythrose 4-phosphate and phosphoenolpyruvate: step 7/7. Functionally, catalyzes the anti-1,4-elimination of the C-3 phosphate and the C-6 proR hydrogen from 5-enolpyruvylshikimate-3-phosphate (EPSP) to yield chorismate, which is the branch point compound that serves as the starting substrate for the three terminal pathways of aromatic amino acid biosynthesis. This reaction introduces a second double bond into the aromatic ring system. This is Chorismate synthase from Arthrobacter sp. (strain FB24).